A 108-amino-acid chain; its full sequence is MDKTIDDIDFEKSGGLVPVIVQDANTKEVLTLAYSNRESLELAKKTRKSWFYSRSRNKLWMKGEESGNTQEIKEILVDCDSDAIIYLVEPSGPACHTGERVCFHNELK.

Asp-78 provides a ligand contact to Mg(2+). Cys-79 contacts Zn(2+). Mg(2+)-binding residues include Asp-80 and Asp-82. Positions 95 and 102 each coordinate Zn(2+).

It belongs to the PRA-CH family. Homodimer. Mg(2+) serves as cofactor. It depends on Zn(2+) as a cofactor.

The protein localises to the cytoplasm. It catalyses the reaction 1-(5-phospho-beta-D-ribosyl)-5'-AMP + H2O = 1-(5-phospho-beta-D-ribosyl)-5-[(5-phospho-beta-D-ribosylamino)methylideneamino]imidazole-4-carboxamide. The protein operates within amino-acid biosynthesis; L-histidine biosynthesis; L-histidine from 5-phospho-alpha-D-ribose 1-diphosphate: step 3/9. Functionally, catalyzes the hydrolysis of the adenine ring of phosphoribosyl-AMP. This is Phosphoribosyl-AMP cyclohydrolase from Nitrosopumilus maritimus (strain SCM1).